The primary structure comprises 283 residues: Thymidylate synthase (283 aa).

Arg22 is a binding site for dUMP. The Nucleophile role is filled by Cys160. Residues 180–183 (RSCD), Asn191, and 221–223 (HIY) each bind dUMP. A (6R)-5,10-methylene-5,6,7,8-tetrahydrofolate-binding site is contributed by Asp183. Position 282 (Ser282) interacts with (6R)-5,10-methylene-5,6,7,8-tetrahydrofolate.

Belongs to the thymidylate synthase family. Bacterial-type ThyA subfamily. Homodimer.

It is found in the cytoplasm. It catalyses the reaction dUMP + (6R)-5,10-methylene-5,6,7,8-tetrahydrofolate = 7,8-dihydrofolate + dTMP. It participates in pyrimidine metabolism; dTTP biosynthesis. Catalyzes the reductive methylation of 2'-deoxyuridine-5'-monophosphate (dUMP) to 2'-deoxythymidine-5'-monophosphate (dTMP) while utilizing 5,10-methylenetetrahydrofolate (mTHF) as the methyl donor and reductant in the reaction, yielding dihydrofolate (DHF) as a by-product. This enzymatic reaction provides an intracellular de novo source of dTMP, an essential precursor for DNA biosynthesis. The polypeptide is Thymidylate synthase (Haemophilus influenzae (strain ATCC 51907 / DSM 11121 / KW20 / Rd)).